Reading from the N-terminus, the 227-residue chain is Urease accessory protein UreF (227 aa).

This sequence belongs to the UreF family. UreD, UreF and UreG form a complex that acts as a GTP-hydrolysis-dependent molecular chaperone, activating the urease apoprotein by helping to assemble the nickel containing metallocenter of UreC. The UreE protein probably delivers the nickel.

The protein resides in the cytoplasm. Required for maturation of urease via the functional incorporation of the urease nickel metallocenter. The sequence is that of Urease accessory protein UreF from Blochmanniella floridana.